Consider the following 494-residue polypeptide: Glutamyl-tRNA(Gln) amidotransferase subunit A (494 aa).

Active-site charge relay system residues include lysine 78 and serine 158. Serine 182 functions as the Acyl-ester intermediate in the catalytic mechanism.

It belongs to the amidase family. GatA subfamily. As to quaternary structure, heterotrimer of A, B and C subunits.

It carries out the reaction L-glutamyl-tRNA(Gln) + L-glutamine + ATP + H2O = L-glutaminyl-tRNA(Gln) + L-glutamate + ADP + phosphate + H(+). Functionally, allows the formation of correctly charged Gln-tRNA(Gln) through the transamidation of misacylated Glu-tRNA(Gln) in organisms which lack glutaminyl-tRNA synthetase. The reaction takes place in the presence of glutamine and ATP through an activated gamma-phospho-Glu-tRNA(Gln). This Xanthobacter autotrophicus (strain ATCC BAA-1158 / Py2) protein is Glutamyl-tRNA(Gln) amidotransferase subunit A.